The sequence spans 351 residues: Anthranilate phosphoribosyltransferase (351 aa).

5-phospho-alpha-D-ribose 1-diphosphate is bound by residues Gly80, Gly83–Asp84, Thr88, Asn90–Thr93, Lys108–Ser116, and Ser120. An anthranilate-binding site is contributed by Gly80. Ser92 is a binding site for Mg(2+). Anthranilate is bound at residue Asn111. Residue Arg166 coordinates anthranilate. Positions 229 and 230 each coordinate Mg(2+).

Belongs to the anthranilate phosphoribosyltransferase family. Homodimer. Requires Mg(2+) as cofactor.

It catalyses the reaction N-(5-phospho-beta-D-ribosyl)anthranilate + diphosphate = 5-phospho-alpha-D-ribose 1-diphosphate + anthranilate. It participates in amino-acid biosynthesis; L-tryptophan biosynthesis; L-tryptophan from chorismate: step 2/5. Its function is as follows. Catalyzes the transfer of the phosphoribosyl group of 5-phosphorylribose-1-pyrophosphate (PRPP) to anthranilate to yield N-(5'-phosphoribosyl)-anthranilate (PRA). In Chlorobium phaeovibrioides (strain DSM 265 / 1930) (Prosthecochloris vibrioformis (strain DSM 265)), this protein is Anthranilate phosphoribosyltransferase.